Reading from the N-terminus, the 405-residue chain is MPLYRYKALDAHGEMLDGQMEAANDAEVALRLQEQGHLPVETRLATGENGSPSLRMLLRKKPFDNAALVQFTQQLATLIGAGQPLDRALSILMDLPEDDKSRRVIADIRDTVRGGAPLSVALERQHGLFSKLYINMVRAGEAGGSMQDTLQRLADYLERSRALKGKVINALIYPAILLAVVGCALLFLLGYVVPQFAQMYESLDVALPWFTQAVLSVGLLVRDWWLVLVVIPGVLGLWLDRKRRNAAFRAALDAWLLRQKVIGSLIARLETARLTRTLGTLLRNGVPLLAAIGIARNVMSNTALVEDVAAAADDVKNGHGLSMSLARGKRFPRLALQMIQVGEESGALDTMLLKTADTFELETAQAIDRALAALVPLITLVLASVVGLVIISVLVPLYDLTNAIG.

Residues 1–169 (MPLYRYKALD…SRALKGKVIN (169 aa)) lie on the Cytoplasmic side of the membrane. Residues Asp98, Gln151, and Asp155 each contribute to the Ca(2+) site. Residues 170 to 190 (ALIYPAILLAVVGCALLFLLG) form a helical membrane-spanning segment. Topologically, residues 191-218 (YVVPQFAQMYESLDVALPWFTQAVLSVG) are periplasmic. The helical transmembrane segment at 219–239 (LLVRDWWLVLVVIPGVLGLWL) threads the bilayer. At 240-370 (DRKRRNAAFR…LETAQAIDRA (131 aa)) the chain is on the cytoplasmic side. The helical transmembrane segment at 371 to 391 (LAALVPLITLVLASVVGLVII) threads the bilayer. Residues 392 to 405 (SVLVPLYDLTNAIG) lie on the Periplasmic side of the membrane.

The protein belongs to the GSP F family. As to quaternary structure, type II secretion system is composed of four main components: the outer membrane complex, the inner membrane complex, the cytoplasmic secretion ATPase and the periplasm-spanning pseudopilus. Homodimer. Interacts with XpsE and XpsL components.

Its subcellular location is the cell inner membrane. Component of the type II secretion system inner membrane complex required for the energy-dependent secretion of extracellular factors such as proteases and toxins from the periplasm. This chain is Type II secretion system protein F (xpsF), found in Xanthomonas campestris pv. campestris (strain ATCC 33913 / DSM 3586 / NCPPB 528 / LMG 568 / P 25).